A 125-amino-acid polypeptide reads, in one-letter code: Small ribosomal subunit protein uS13 (125 aa).

Positions 97-125 (PLRGQRTKTNARTRKGKRKTVANKKMASK) are disordered.

Belongs to the universal ribosomal protein uS13 family. In terms of assembly, part of the 30S ribosomal subunit. Forms a loose heterodimer with protein S19. Forms two bridges to the 50S subunit in the 70S ribosome.

Located at the top of the head of the 30S subunit, it contacts several helices of the 16S rRNA. In the 70S ribosome it contacts the 23S rRNA (bridge B1a) and protein L5 of the 50S subunit (bridge B1b), connecting the 2 subunits; these bridges are implicated in subunit movement. Contacts the tRNAs in the A and P-sites. The protein is Small ribosomal subunit protein uS13 of Borrelia hermsii (strain HS1 / DAH).